The primary structure comprises 302 residues: 33 kDa chaperonin (302 aa).

Intrachain disulfides connect C234-C236 and C267-C270.

This sequence belongs to the HSP33 family. In terms of processing, under oxidizing conditions two disulfide bonds are formed involving the reactive cysteines. Under reducing conditions zinc is bound to the reactive cysteines and the protein is inactive.

The protein localises to the cytoplasm. Redox regulated molecular chaperone. Protects both thermally unfolding and oxidatively damaged proteins from irreversible aggregation. Plays an important role in the bacterial defense system toward oxidative stress. This is 33 kDa chaperonin from Neisseria gonorrhoeae (strain ATCC 700825 / FA 1090).